Here is a 554-residue protein sequence, read N- to C-terminus: Phenylalanine--tRNA ligase beta subunit (554 aa).

Residues 276 to 351 (LTPRYREISI…KNHGYEKFEG (76 aa)) enclose the B5 domain. Residues Asp-329, Asp-335, Glu-338, and Glu-339 each coordinate Mg(2+).

The protein belongs to the phenylalanyl-tRNA synthetase beta subunit family. Type 2 subfamily. In terms of assembly, tetramer of two alpha and two beta subunits. It depends on Mg(2+) as a cofactor.

The protein resides in the cytoplasm. It catalyses the reaction tRNA(Phe) + L-phenylalanine + ATP = L-phenylalanyl-tRNA(Phe) + AMP + diphosphate + H(+). The sequence is that of Phenylalanine--tRNA ligase beta subunit from Methanococcus vannielii (strain ATCC 35089 / DSM 1224 / JCM 13029 / OCM 148 / SB).